We begin with the raw amino-acid sequence, 504 residues long: MDLLSALTLETWVLLAVVLVLLYGFGTRTHGLFKKQGIPGPKPLPFFGTVLNYYMGLWKFDVECHKKYGKIWGLFDGQMPLFAITDTEMIKNVLVKECFSVFTNRRDFGPVGIMGKAVSVAKDEEWKRYRALLSPTFTSGRLKEMFPIIEQYGDILVKYLKQEAETGKPVTMKKVFGAYSMDVITSTSFGVNVDSLNNPKDPFVEKTKKLLRFDFFDPLFLSVVLFPFLTPIYEMLNICMFPKDSIEFFKKFVYRMKETRLDSVQKHRVDFLQLMMNAHNDSKDKESHTALSDMEITAQSIIFIFAGYEPTSSTLSFVLHSLATHPDTQKKLQEEIDRALPNKAPPTYDTVMEMEYLDMVLNETLRLYPIGNRLERVCKKDVEINGVFMPKGSVVMIPSYALHRDPQHWPEPEEFRPERFSKENKGSIDPYVYLPFGNGPRNCIGMRFALMNMKLALTKVLQNFSFQPCKETQIPLKLSRQGLLQPTKPIILKVVPRDEIITGS.

Residue Cys-443 coordinates heme.

Belongs to the cytochrome P450 family. Heme serves as cofactor.

The protein localises to the endoplasmic reticulum membrane. It localises to the microsome membrane. It carries out the reaction an organic molecule + reduced [NADPH--hemoprotein reductase] + O2 = an alcohol + oxidized [NADPH--hemoprotein reductase] + H2O + H(+). Cytochromes P450 are a group of heme-thiolate monooxygenases. In liver microsomes, this enzyme is involved in an NADPH-dependent electron transport pathway. It oxidizes a variety of structurally unrelated compounds, including steroids, fatty acids, and xenobiotics. This is Cytochrome P450 3A1 (Cyp3a1) from Rattus norvegicus (Rat).